Reading from the N-terminus, the 385-residue chain is 8-amino-7-oxononanoate synthase (385 aa).

A substrate-binding site is contributed by Arg-21. A pyridoxal 5'-phosphate-binding site is contributed by 108 to 109; it reads GF. His-133 is a binding site for substrate. Residues Ser-179, His-207, and Thr-233 each coordinate pyridoxal 5'-phosphate. An N6-(pyridoxal phosphate)lysine modification is found at Lys-236. Thr-352 lines the substrate pocket.

Belongs to the class-II pyridoxal-phosphate-dependent aminotransferase family. BioF subfamily. Homodimer. Pyridoxal 5'-phosphate is required as a cofactor.

It catalyses the reaction 6-carboxyhexanoyl-[ACP] + L-alanine + H(+) = (8S)-8-amino-7-oxononanoate + holo-[ACP] + CO2. The protein operates within cofactor biosynthesis; biotin biosynthesis. Functionally, catalyzes the decarboxylative condensation of pimeloyl-[acyl-carrier protein] and L-alanine to produce 8-amino-7-oxononanoate (AON), [acyl-carrier protein], and carbon dioxide. In Klebsiella pneumoniae subsp. pneumoniae (strain ATCC 700721 / MGH 78578), this protein is 8-amino-7-oxononanoate synthase.